A 284-amino-acid polypeptide reads, in one-letter code: MEMO1 family protein LS215_2219 (284 aa).

It belongs to the MEMO1 family.

This chain is MEMO1 family protein LS215_2219, found in Saccharolobus islandicus (strain L.S.2.15 / Lassen #1) (Sulfolobus islandicus).